We begin with the raw amino-acid sequence, 156 residues long: MKMKSGMEQAVSVLLLLSRLPVQASLTSEAISQRLRVSPSYLKKLMRTLVQAGLAESLPGTKGGFTLTKPLADITLYDVYQAVEGRGSMYQGKGLLQSVFEGESHCVLETVMAEIEDKWSNLMREESLQHVMDRVGELYDLEKIDDWVIKQVKGQL.

In terms of domain architecture, HTH rrf2-type spans 2-133 (KMKSGMEQAV…REESLQHVMD (132 aa)).

The protein is Putative HTH-type transcriptional regulator YwgB (ywgB) of Bacillus subtilis (strain 168).